The primary structure comprises 32 residues: Protamine-2 (32 aa).

The segment at 1 to 32 (PRRRRSSSRPVRRRRARRVSRRRRRRGGRRRR) is disordered.

In terms of tissue distribution, testis.

The protein resides in the nucleus. It is found in the chromosome. Protamines substitute for histones in the chromatin of sperm during the haploid phase of spermatogenesis. They compact sperm DNA into a highly condensed, stable and inactive complex. The chain is Protamine-2 from Oncorhynchus mykiss (Rainbow trout).